The sequence spans 97 residues: ATP-dependent Clp protease adapter protein ClpS (97 aa).

Belongs to the ClpS family. Binds to the N-terminal domain of the chaperone ClpA.

Its function is as follows. Involved in the modulation of the specificity of the ClpAP-mediated ATP-dependent protein degradation. In Nostoc sp. (strain PCC 7120 / SAG 25.82 / UTEX 2576), this protein is ATP-dependent Clp protease adapter protein ClpS.